Consider the following 880-residue polypeptide: Interference hedgehog (880 aa).

The first 20 residues, 1–20 (MTLLTSSLLLFSLLTSRLEA), serve as a signal peptide directing secretion. The Extracellular segment spans residues 21-703 (IPVLEKSPAH…ETFNMSPMLT (683 aa)). 4 consecutive Ig-like C2-type domains span residues 45-142 (PGVR…TARL), 155-232 (PESP…ERIQ), 252-340 (PHLL…YIKV), and 346-432 (PQIV…LQVN). Disulfide bonds link Cys68–Cys126, Cys173–Cys220, Cys276–Cys324, and Cys367–Cys414. Asn102 and Asn209 each carry an N-linked (GlcNAc...) asparagine glycan. Residues 429–467 (LQVNPKQIQEPRESGGTHRPNPNQGSKHKQMYPPTPPNV) form a disordered region. Fibronectin type-III domains lie at 461 to 567 (PPTP…LQPG) and 575 to 670 (VPEL…TQRP). N-linked (GlcNAc...) asparagine glycosylation is present at Asn466. Heparin is bound by residues Arg497, Lys501, Lys503, and Arg541. Asn557 is a glycosylation site (N-linked (GlcNAc...) asparagine). Residues 662-692 (LKQGRTQRPKTSTTEEPTLQMGDRDTTTPSH) form a disordered region. A compositionally biased stretch (polar residues) spans 665-678 (GRTQRPKTSTTEEP). An N-linked (GlcNAc...) asparagine glycan is attached at Asn693. Residues 704-724 (GTIGGGAVLILLLISTCLCVC) traverse the membrane as a helical segment. Residues 725 to 880 (RRRNSRSRGN…SSGSLNSVGV (156 aa)) lie on the Cytoplasmic side of the membrane. Disordered stretches follow at residues 728 to 762 (NSRS…QRQR) and 775 to 880 (QQQQ…SVGV). 2 stretches are compositionally biased toward low complexity: residues 823–837 (RAGG…NNNN) and 864–880 (SSRS…SVGV).

Belongs to the immunoglobulin superfamily. IHOG family. As to quaternary structure, homodimer. Heterotetramer; 2 iHog chains bind 2 hh chains when facilitated by heparin, heparin is required to promote high-affinity interactions between hh and iHog.

It is found in the membrane. Functionally, mediates response to the active Hedgehog (Hh) protein signal in embryos, functioning upstream or at the level of patched (ptc). The protein is Interference hedgehog of Drosophila simulans (Fruit fly).